The primary structure comprises 577 residues: Urease subunit alpha (577 aa).

The region spanning 136-577 (GTVDCHVHLI…LPMTQRYFLF (442 aa)) is the Urease domain. His-141, His-143, and Lys-224 together coordinate Ni(2+). Residue Lys-224 is modified to N6-carboxylysine. His-226 contacts substrate. 2 residues coordinate Ni(2+): His-253 and His-279. Catalysis depends on His-327, which acts as the Proton donor. Asp-367 serves as a coordination point for Ni(2+).

Belongs to the metallo-dependent hydrolases superfamily. Urease alpha subunit family. Heterotrimer of UreA (gamma), UreB (beta) and UreC (alpha) subunits. Three heterotrimers associate to form the active enzyme. The cofactor is Ni cation. In terms of processing, carboxylation allows a single lysine to coordinate two nickel ions.

Its subcellular location is the cytoplasm. The enzyme catalyses urea + 2 H2O + H(+) = hydrogencarbonate + 2 NH4(+). It participates in nitrogen metabolism; urea degradation; CO(2) and NH(3) from urea (urease route): step 1/1. The chain is Urease subunit alpha from Mycobacterium bovis (strain ATCC BAA-935 / AF2122/97).